A 378-amino-acid chain; its full sequence is 1-acyl-sn-glycerol-3-phosphate acyltransferase delta (378 aa).

The helical transmembrane segment at 11 to 31 (FLCHLVFCYVFIASGLIINTV) threads the bilayer. Positions 96-101 (HKFEID) match the HXXXXD motif motif. 3 helical membrane-spanning segments follow: residues 125–145 (ELAYVPIIGWMWYFTEMVFCS), 307–327 (TLVNWLFWASLVLYPFFQFLV), and 338–358 (LASFILVFFVASMGVRWMIGV).

It belongs to the 1-acyl-sn-glycerol-3-phosphate acyltransferase family.

It is found in the endoplasmic reticulum membrane. It carries out the reaction a 1-acyl-sn-glycero-3-phosphate + an acyl-CoA = a 1,2-diacyl-sn-glycero-3-phosphate + CoA. It catalyses the reaction (4Z,7Z,10Z,13Z,16Z,19Z)-docosahexaenoyl-CoA + 1-hexadecanoyl-sn-glycero-3-phosphate = 1-hexadecanoyl-2-(4Z,7Z,10Z,13Z,16Z,19Z-docosahexaenoyl)-sn-glycero-3-phosphate + CoA. The enzyme catalyses 1-octadecanoyl-sn-glycero-3-phosphate + (9Z,12Z)-octadecadienoyl-CoA = 1-octadecanoyl-2-(9Z,12Z-octadecadienoyl)-sn-glycero-3-phosphate + CoA. The catalysed reaction is 1-octadecanoyl-sn-glycero-3-phosphate + (4Z,7Z,10Z,13Z,16Z,19Z)-docosahexaenoyl-CoA = 1-octadecanoyl-2-(4Z,7Z,10Z,13Z,16Z,19Z-docosahexaenoyl)-sn-glycero-3-phosphate + CoA. It carries out the reaction (4Z,7Z,10Z,13Z,16Z,19Z)-docosahexaenoyl-CoA + 1-(9Z-octadecenoyl)-sn-glycero-3-phosphate = 1-(9Z-octadecenoyl)-2-(4Z,7Z,10Z,13Z,16Z,19Z-docosahexaenoyl)-sn-glycero-3-phosphate + CoA. Its pathway is phospholipid metabolism; CDP-diacylglycerol biosynthesis; CDP-diacylglycerol from sn-glycerol 3-phosphate: step 2/3. Functionally, converts 1-acyl-sn-glycerol-3-phosphate (lysophosphatidic acid or LPA) into 1,2-diacyl-sn-glycerol-3-phosphate (phosphatidic acid or PA) by incorporating an acyl moiety at the sn-2 position of the glycerol backbone. Exhibits high acyl-CoA specificity for polyunsaturated fatty acyl-CoA, especially docosahexaenoyl-CoA (22:6-CoA, DHA-CoA). The polypeptide is 1-acyl-sn-glycerol-3-phosphate acyltransferase delta (AGPAT4) (Macaca fascicularis (Crab-eating macaque)).